The sequence spans 367 residues: Probable cysteine protease RD19D (367 aa).

The signal sequence occupies residues 1 to 22 (MVAKALAQLITCIILFCHVVAS). The propeptide at 23–136 (VEDLTIRQVT…AEAPMVEVDG (114 aa)) is activation peptide. N61 carries N-linked (GlcNAc...) asparagine glycosylation. Disulfide bonds link C158/C208 and C192/C241. C161 is a catalytic residue. The N-linked (GlcNAc...) asparagine glycan is linked to N254. Cysteines 297 and 352 form a disulfide. Residues H304 and N331 contribute to the active site.

The protein belongs to the peptidase C1 family.

Functionally, probable thiol protease. This is Probable cysteine protease RD19D from Arabidopsis thaliana (Mouse-ear cress).